Consider the following 179-residue polypeptide: Large ribosomal subunit protein uL5 (179 aa).

Belongs to the universal ribosomal protein uL5 family. In terms of assembly, part of the 50S ribosomal subunit; part of the 5S rRNA/L5/L18/L25 subcomplex. Contacts the 5S rRNA and the P site tRNA. Forms a bridge to the 30S subunit in the 70S ribosome.

In terms of biological role, this is one of the proteins that bind and probably mediate the attachment of the 5S RNA into the large ribosomal subunit, where it forms part of the central protuberance. In the 70S ribosome it contacts protein S13 of the 30S subunit (bridge B1b), connecting the 2 subunits; this bridge is implicated in subunit movement. Contacts the P site tRNA; the 5S rRNA and some of its associated proteins might help stabilize positioning of ribosome-bound tRNAs. The sequence is that of Large ribosomal subunit protein uL5 from Geobacillus sp. (strain WCH70).